Here is a 138-residue protein sequence, read N- to C-terminus: Large ribosomal subunit protein uL16m (138 aa).

Belongs to the universal ribosomal protein uL16 family.

It is found in the mitochondrion. The sequence is that of Large ribosomal subunit protein uL16m (RPL16) from Chondrus crispus (Carrageen Irish moss).